Reading from the N-terminus, the 312-residue chain is Malate dehydrogenase (312 aa).

Residues 7 to 13 (GAAGGIG) and aspartate 34 each bind NAD(+). Positions 81 and 87 each coordinate substrate. NAD(+) contacts are provided by residues asparagine 94 and 117–119 (ITN). 2 residues coordinate substrate: asparagine 119 and arginine 153. Histidine 177 acts as the Proton acceptor in catalysis. Methionine 227 serves as a coordination point for NAD(+).

It belongs to the LDH/MDH superfamily. MDH type 1 family. Homodimer.

The catalysed reaction is (S)-malate + NAD(+) = oxaloacetate + NADH + H(+). Catalyzes the reversible oxidation of malate to oxaloacetate. The protein is Malate dehydrogenase of Edwardsiella ictaluri (strain 93-146).